The sequence spans 187 residues: Abscisic acid receptor PYL9 (187 aa).

The START-like stretch occupies residues 27–178 (HLCRENQCTS…NLKSLADVSE (152 aa)). Intrachain disulfides connect Cys29-Cys159 and Cys34-Cys159. Residues Lys63, 91 to 96 (ATTSTE), 118 to 124 (RLKNYSS), and Glu143 contribute to the abscisate site. Positions 87 to 91 (SGLPA) match the Gate loop motif. The Latch loop motif lies at 117–119 (HRL).

Belongs to the PYR/PYL/RCAR abscisic acid intracellular receptor family. Homodimer. Monomer. Binds ABA on one subunit only. Binds to CARs protein in an ABA-independent manner, both at the plasma membrane and in the nucleus. Binds specifically (+)-ABA but not (-)-ABA. Interacts with HAB1, ABI1 and ABI2, and possibly with other PP2Cs. Interacts with TOPP1. Interacts with DDA1. In terms of tissue distribution, expressed in root tips, vascular tissues, stomata, flowers, pollen tubes and developing seeds.

Its subcellular location is the cytoplasm. The protein localises to the nucleus. It is found in the cell membrane. Functionally, receptor for abscisic acid (ABA) required for ABA-mediated responses such as stomatal closure and germination inhibition. Inhibits the activity of group-A protein phosphatases type 2C (PP2Cs) in an ABA-independent manner but more efficiently when activated by ABA. Confers enhanced sensitivity to ABA. Can be activated only by (+)-ABA but not by (-)-ABA. The protein is Abscisic acid receptor PYL9 (PYL9) of Arabidopsis thaliana (Mouse-ear cress).